Consider the following 223-residue polypeptide: Probable chemoreceptor glutamine deamidase CheD (223 aa).

The disordered stretch occupies residues 189–223; sequence QTASAKAHTPPQIERFSAPAKPRFERFTRPSTATS.

The protein belongs to the CheD family.

It catalyses the reaction L-glutaminyl-[protein] + H2O = L-glutamyl-[protein] + NH4(+). In terms of biological role, probably deamidates glutamine residues to glutamate on methyl-accepting chemotaxis receptors (MCPs), playing an important role in chemotaxis. This chain is Probable chemoreceptor glutamine deamidase CheD, found in Bordetella petrii (strain ATCC BAA-461 / DSM 12804 / CCUG 43448).